The chain runs to 567 residues: UPF0313 protein CTN_0332 (567 aa).

The region spanning 288-560 (KAIETVKFSI…NKMKENVLFK (273 aa)) is the Radical SAM core domain. Positions 303, 307, and 310 each coordinate [4Fe-4S] cluster.

The protein belongs to the UPF0313 family. The cofactor is [4Fe-4S] cluster.

This Thermotoga neapolitana (strain ATCC 49049 / DSM 4359 / NBRC 107923 / NS-E) protein is UPF0313 protein CTN_0332.